The following is a 281-amino-acid chain: NAD kinase (281 aa).

The active-site Proton acceptor is Asp-61. Residues 61 to 62, 134 to 135, Arg-145, Asp-164, 175 to 180, and Gln-234 each bind NAD(+); these read DG, ND, and TAYSLS.

The protein belongs to the NAD kinase family. It depends on a divalent metal cation as a cofactor.

It localises to the cytoplasm. It carries out the reaction NAD(+) + ATP = ADP + NADP(+) + H(+). Its function is as follows. Involved in the regulation of the intracellular balance of NAD and NADP, and is a key enzyme in the biosynthesis of NADP. Catalyzes specifically the phosphorylation on 2'-hydroxyl of the adenosine moiety of NAD to yield NADP. In Clostridium botulinum (strain Loch Maree / Type A3), this protein is NAD kinase.